The following is a 635-amino-acid chain: DNA mismatch repair protein MutL (635 aa).

The segment at 352-380 is disordered; that stretch reads KAALQRGWVPPGAGRPGEGGGRAAPPPWR.

Belongs to the DNA mismatch repair MutL/HexB family.

This protein is involved in the repair of mismatches in DNA. It is required for dam-dependent methyl-directed DNA mismatch repair. May act as a 'molecular matchmaker', a protein that promotes the formation of a stable complex between two or more DNA-binding proteins in an ATP-dependent manner without itself being part of a final effector complex. This Symbiobacterium thermophilum (strain DSM 24528 / JCM 14929 / IAM 14863 / T) protein is DNA mismatch repair protein MutL.